A 58-amino-acid chain; its full sequence is Small ribosomal subunit protein bS21 (58 aa).

Belongs to the bacterial ribosomal protein bS21 family.

The sequence is that of Small ribosomal subunit protein bS21 from Lactobacillus acidophilus (strain ATCC 700396 / NCK56 / N2 / NCFM).